Consider the following 61-residue polypeptide: Large ribosomal subunit protein uL30 (61 aa).

It belongs to the universal ribosomal protein uL30 family. In terms of assembly, part of the 50S ribosomal subunit.

The sequence is that of Large ribosomal subunit protein uL30 from Nitrosomonas eutropha (strain DSM 101675 / C91 / Nm57).